Reading from the N-terminus, the 292-residue chain is Homoserine kinase (292 aa).

Residue 84–94 (PISRGLGSSSA) participates in ATP binding.

The protein belongs to the GHMP kinase family. Homoserine kinase subfamily.

The protein localises to the cytoplasm. It catalyses the reaction L-homoserine + ATP = O-phospho-L-homoserine + ADP + H(+). The protein operates within amino-acid biosynthesis; L-threonine biosynthesis; L-threonine from L-aspartate: step 4/5. Functionally, catalyzes the ATP-dependent phosphorylation of L-homoserine to L-homoserine phosphate. The chain is Homoserine kinase from Sulfurovum sp. (strain NBC37-1).